The sequence spans 184 residues: MQLDKQNLIWIDLEMTGLDPESERIIEIATIVTDKHLNILAEGPVLAIHQSDECLAKMNDWCMKTHTENGLVERVKNSRLTERAAELQTLDFLKKWVPKGVSPICGNSVSQDKRFLFKYMPELADYFHYRHLDVSTLKELASRWKPDVLKGFTKKNTHLALDDIRESIAELAYYREHFINLKNE.

In terms of domain architecture, Exonuclease spans Leu8–Leu171. Tyr129 is a catalytic residue.

It belongs to the oligoribonuclease family.

The protein resides in the cytoplasm. In terms of biological role, 3'-to-5' exoribonuclease specific for small oligoribonucleotides. This is Oligoribonuclease from Pasteurella multocida (strain Pm70).